Consider the following 135-residue polypeptide: L-ectoine synthase (135 aa).

This sequence belongs to the ectoine synthase family.

It carries out the reaction (2S)-4-acetamido-2-aminobutanoate = L-ectoine + H2O. The protein operates within amine and polyamine biosynthesis; ectoine biosynthesis; L-ectoine from L-aspartate 4-semialdehyde: step 3/3. Functionally, catalyzes the circularization of gamma-N-acetyl-alpha,gamma-diaminobutyric acid (ADABA) to ectoine (1,4,5,6-tetrahydro-2-methyl-4-pyrimidine carboxylic acid), which is an excellent osmoprotectant. The polypeptide is L-ectoine synthase (Hyphomonas neptunium (strain ATCC 15444)).